The following is a 324-amino-acid chain: 4-hydroxy-3-methylbut-2-enyl diphosphate reductase (324 aa).

Residue Cys-28 participates in [4Fe-4S] cluster binding. (2E)-4-hydroxy-3-methylbut-2-enyl diphosphate-binding residues include His-57 and His-90. Positions 57 and 90 each coordinate dimethylallyl diphosphate. The isopentenyl diphosphate site is built by His-57 and His-90. Cys-112 contributes to the [4Fe-4S] cluster binding site. Residue His-140 coordinates (2E)-4-hydroxy-3-methylbut-2-enyl diphosphate. Residue His-140 participates in dimethylallyl diphosphate binding. His-140 is an isopentenyl diphosphate binding site. Glu-142 (proton donor) is an active-site residue. Thr-180 is a binding site for (2E)-4-hydroxy-3-methylbut-2-enyl diphosphate. Residue Cys-210 coordinates [4Fe-4S] cluster. (2E)-4-hydroxy-3-methylbut-2-enyl diphosphate contacts are provided by Ser-238, Ser-239, Asn-240, and Ser-282. Residues Ser-238, Ser-239, Asn-240, and Ser-282 each contribute to the dimethylallyl diphosphate site. Residues Ser-238, Ser-239, Asn-240, and Ser-282 each coordinate isopentenyl diphosphate.

Belongs to the IspH family. [4Fe-4S] cluster is required as a cofactor.

The catalysed reaction is isopentenyl diphosphate + 2 oxidized [2Fe-2S]-[ferredoxin] + H2O = (2E)-4-hydroxy-3-methylbut-2-enyl diphosphate + 2 reduced [2Fe-2S]-[ferredoxin] + 2 H(+). The enzyme catalyses dimethylallyl diphosphate + 2 oxidized [2Fe-2S]-[ferredoxin] + H2O = (2E)-4-hydroxy-3-methylbut-2-enyl diphosphate + 2 reduced [2Fe-2S]-[ferredoxin] + 2 H(+). It participates in isoprenoid biosynthesis; dimethylallyl diphosphate biosynthesis; dimethylallyl diphosphate from (2E)-4-hydroxy-3-methylbutenyl diphosphate: step 1/1. It functions in the pathway isoprenoid biosynthesis; isopentenyl diphosphate biosynthesis via DXP pathway; isopentenyl diphosphate from 1-deoxy-D-xylulose 5-phosphate: step 6/6. Catalyzes the conversion of 1-hydroxy-2-methyl-2-(E)-butenyl 4-diphosphate (HMBPP) into a mixture of isopentenyl diphosphate (IPP) and dimethylallyl diphosphate (DMAPP). Acts in the terminal step of the DOXP/MEP pathway for isoprenoid precursor biosynthesis. In Ralstonia nicotianae (strain ATCC BAA-1114 / GMI1000) (Ralstonia solanacearum), this protein is 4-hydroxy-3-methylbut-2-enyl diphosphate reductase.